We begin with the raw amino-acid sequence, 794 residues long: Striatin-3 (794 aa).

Position 1 is an N-acetylmethionine (methionine 1). A compositionally biased stretch (gly residues) spans 1 to 12; the sequence is MDELAGGGGGQG. Positions 1–59 are disordered; sequence MDELAGGGGGQGMAVPPRPQQGPGGNLSLPPGANGAPGGGGPPAAETAGPPAGPELSRP. The segment at 70-78 is caveolin-binding; that stretch reads YIQHEWARF. Residues 76–135 adopt a coiled-coil conformation; it reads ARFEMERAHWEVERAELQARIAFLQGERKGQENLKKDLVRRIKMLEYALKQERAKYHKLK. A Phosphothreonine modification is found at threonine 149. The calmodulin-binding stretch occupies residues 164–181; sequence QNSQLTWKQGRQLLRQYL. 5 positions are modified to phosphoserine: serine 200, serine 212, serine 227, serine 255, and serine 332. The interval 309-339 is disordered; the sequence is EDGEGAGEARSSGDGTEWDKDDLSPTAEVWD. WD repeat units follow at residues 475-514, 528-567, 581-620, 676-715, 718-757, and 764-794; these read SHFD…PAKK, AHIG…VDPY, AHTD…PCIC, QSSN…MIHS, AHLD…CVQE, and KLDE…KVFV.

The protein belongs to the WD repeat striatin family. As to quaternary structure, tetramerizes. Part of the core of STRIPAK complexes composed of PP2A catalytic and scaffolding subunits, the striatins (PP2A regulatory subunits), the striatin-associated proteins MOB4, STRIP1 and STRIP2, PDCD10 and members of the STE20 kinases, such as STK24 and STK26. The STRIPAK complex can be extended by adapter proteins such as SLMAP:SIKE1 or CTTNBP2NL. Interacts with CDC42BPB.

The protein resides in the cytoplasm. It localises to the membrane. In terms of biological role, calmodulin-binding scaffolding protein which is the center of the striatin-interacting phosphatase and kinase (STRIPAK) complexes. STRIPAK complexes have critical roles in protein (de)phosphorylation and are regulators of multiple signaling pathways including Hippo, MAPK, nuclear receptor and cytoskeleton remodeling. Different types of STRIPAK complexes are involved in a variety of biological processes such as cell growth, differentiation, apoptosis, metabolism and immune regulation. The chain is Striatin-3 (Strn3) from Rattus norvegicus (Rat).